We begin with the raw amino-acid sequence, 210 residues long: ATP-dependent Clp protease proteolytic subunit (210 aa).

The Nucleophile role is filled by Ser107. His132 is an active-site residue.

The protein belongs to the peptidase S14 family. Fourteen ClpP subunits assemble into 2 heptameric rings which stack back to back to give a disk-like structure with a central cavity, resembling the structure of eukaryotic proteasomes.

It is found in the cytoplasm. The catalysed reaction is Hydrolysis of proteins to small peptides in the presence of ATP and magnesium. alpha-casein is the usual test substrate. In the absence of ATP, only oligopeptides shorter than five residues are hydrolyzed (such as succinyl-Leu-Tyr-|-NHMec, and Leu-Tyr-Leu-|-Tyr-Trp, in which cleavage of the -Tyr-|-Leu- and -Tyr-|-Trp bonds also occurs).. In terms of biological role, cleaves peptides in various proteins in a process that requires ATP hydrolysis. Has a chymotrypsin-like activity. Plays a major role in the degradation of misfolded proteins. The polypeptide is ATP-dependent Clp protease proteolytic subunit (Cereibacter sphaeroides (strain ATCC 17029 / ATH 2.4.9) (Rhodobacter sphaeroides)).